The primary structure comprises 166 residues: Large ribosomal subunit protein uL10 (166 aa).

This sequence belongs to the universal ribosomal protein uL10 family. As to quaternary structure, part of the ribosomal stalk of the 50S ribosomal subunit. The N-terminus interacts with L11 and the large rRNA to form the base of the stalk. The C-terminus forms an elongated spine to which L12 dimers bind in a sequential fashion forming a multimeric L10(L12)X complex.

Forms part of the ribosomal stalk, playing a central role in the interaction of the ribosome with GTP-bound translation factors. This is Large ribosomal subunit protein uL10 from Streptococcus pneumoniae serotype 19F (strain G54).